The following is a 703-amino-acid chain: Glycine--tRNA ligase beta subunit (703 aa).

The protein belongs to the class-II aminoacyl-tRNA synthetase family. As to quaternary structure, tetramer of two alpha and two beta subunits.

Its subcellular location is the cytoplasm. The enzyme catalyses tRNA(Gly) + glycine + ATP = glycyl-tRNA(Gly) + AMP + diphosphate. In Myxococcus xanthus (strain DK1622), this protein is Glycine--tRNA ligase beta subunit.